The primary structure comprises 860 residues: MQEQYRPEEIESKVQLHWDEKRTFEVTEDESKEKYYCLSMLPYPSGRLHMGHVRNYTIGDVIARYQRMLGKNVLQPIGWDAFGLPAEGAAVKNNTAPAPWTYDNIAYMKNQLKMLGFGYDWSRELATCTPEYYRWEQKFFTELYKKGLVYKKTSAVNWCPNDQTVLANEQVIDGCCWRCDTKVERKEIPQWFIKITAYADELLNDLDKLDHWPDTVKTMQRNWIGRSEGVEITFNVNDYDNTLTVYTTRPDTFMGCTYLAVAAGHPLAQKAAENNPELAAFIDECRNTKVAEAEMATMEKKGVDTGFKAVHPLTGEEIPVWAANFVLMEYGTGAVMAVPGHDQRDYEFASKYGLNIKPVILAADGSEPDLSQQALTEKGVLFNSGEFNGLDHEAAFNAIADKLTAMGVGERKVNYRLRDWGVSRQRYWGAPIPMVTLEDGTVMPTPDDQLPVILPEDVVMDGITSPIKADPEWAKTTVNGMPALRETDTFDTFMESSWYYARYTCPEYKEGMLDSKAANYWLPVDIYIGGIEHAIMHLLYFRFFHKLMRDAGMVNSDEPAKQLLCQGMVLADAFYYVGENGERNWVSPVDAIVERDEKGRIVKAKDAAGHELVYTGMSKMSKSKNNGIDPQVMVERYGADTVRLFMMFASPADMTLEWQESGVEGANRFLKRVWKLVYEHTAKGDVAALNVDALTEDQKALRRDVHKTIAKVTDDIGRRQTFNTAIAAIMELMNKLAKAPTDGEQDRALMQEALLAVVRMLNPFTPHICFTLWQELKGEGDIDNAPWPVADEKAMVEDSTLVVVQVNGKVRAKITVPVDATEEQVRERAGQEHLVAKYLDGVTVRKVIYVPGKLLNLVVG.

A 'HIGH' region motif is present at residues 42-52 (PYPSGRLHMGH). Positions 619–623 (KMSKS) match the 'KMSKS' region motif. Position 622 (Lys622) interacts with ATP.

It belongs to the class-I aminoacyl-tRNA synthetase family.

It is found in the cytoplasm. It carries out the reaction tRNA(Leu) + L-leucine + ATP = L-leucyl-tRNA(Leu) + AMP + diphosphate. This is Leucine--tRNA ligase from Escherichia coli O81 (strain ED1a).